Here is a 563-residue protein sequence, read N- to C-terminus: MRLAQPDMVSAAPTEVDRLVWPLADGADKSPLGVLSTTEPLLRLQRTQRVWEVPELDAQYAKAFLELWPLGSFLVIGHEPGQVLMLKAGPSSGDINTYQIQRFPGGVSLESSNLCMPDCPHLLAFLSASRDVLPRTLLLPTPTVGAGDNHSDPHRLGCIQVDTSGRVLSVVNQLYLETHGGWGTETPQQTEPETGQKYSLAPRKPTPHRVSWVEDPLRPEAHHTGQEVHHPGADAHSLGSEVHFSCPALEEEEVNNDCYKDEDEEGCEDMLTAHIRALARTRSSYVARQYRCLRARLISDSGNPYSPGDPATELLQDVRQLLTDLQNYLAKDPDVRAVFGNRGPSILREEDLGPAVEVALCRAVLEPLKPALWTKLRTLRAQELRRLRRRQIALRVGAGPEGQSPALRNRNRIHARLAHLHAACAPRRKVALLLAVCSDVYAGLGGGENKEPLGADAFLPALTEELIWSPHIGETQLDVEFLMELLDPGELRGEAGYYLTTWFGALYHIAHYQPDTGRAPQGLSSEARASLRQWHRRRTLHQQAQPTAQANQPFEEPWAIGDP.

Positions 181–208 (GWGTETPQQTEPETGQKYSLAPRKPTPH) are disordered. Residues 184 to 196 (TETPQQTEPETGQ) are compositionally biased toward low complexity. The region spanning 381–518 (AQELRRLRRR…IAHYQPDTGR (138 aa)) is the VPS9 domain. Positions 539 to 563 (TLHQQAQPTAQANQPFEEPWAIGDP) are disordered. Positions 542–553 (QQAQPTAQANQP) are enriched in low complexity.

As to quaternary structure, interacts with RAB5A, RAB22A and MUSK. As to expression, detected in thymus and spleen (at protein level). Detected in lung, liver, kidney, spleen, thymus and skeletal muscle.

It is found in the cell projection. Its subcellular location is the ruffle. The protein localises to the cytoplasmic vesicle. Functionally, guanine nucleotide exchange factor (GEF) for RAB5A and RAB22A that activates RAB5A and RAB22A by exchanging bound GDP for free GTP. Plays a role in endocytosis via its role in activating Rab family members. The sequence is that of Ras and Rab interactor-like protein (Rinl) from Mus musculus (Mouse).